Reading from the N-terminus, the 128-residue chain is Sulfurtransferase TusD (128 aa).

The Cysteine persulfide intermediate role is filled by Cys78.

It belongs to the DsrE/TusD family. As to quaternary structure, heterohexamer, formed by a dimer of trimers. The hexameric TusBCD complex contains 2 copies each of TusB, TusC and TusD. The TusBCD complex interacts with TusE.

It is found in the cytoplasm. In terms of biological role, part of a sulfur-relay system required for 2-thiolation of 5-methylaminomethyl-2-thiouridine (mnm(5)s(2)U) at tRNA wobble positions. Accepts sulfur from TusA and transfers it in turn to TusE. In Erwinia tasmaniensis (strain DSM 17950 / CFBP 7177 / CIP 109463 / NCPPB 4357 / Et1/99), this protein is Sulfurtransferase TusD.